The chain runs to 370 residues: Pantothenate kinase 3 (370 aa).

Glutamate 138 acts as the Proton acceptor in catalysis. Acetyl-CoA is bound by residues serine 192, serine 195, and arginine 207.

It belongs to the type II pantothenate kinase family. Homodimer. Highly expressed in the liver.

The protein localises to the cytoplasm. It carries out the reaction (R)-pantothenate + ATP = (R)-4'-phosphopantothenate + ADP + H(+). The protein operates within cofactor biosynthesis; coenzyme A biosynthesis; CoA from (R)-pantothenate: step 1/5. Subject to allosteric regulation, exists in two distinct conformational states, a catalytically incompetent (or open) conformation stabilized by the binding of acetyl(acyl)-CoA, and a catalytically competent (or closed) conformation stabilized by ATP-binding. Inhibited by acetyl-CoA and its thioesters which act as allosteric inhibitors and compete with the ATP-binding site. Inhibited by sulfonylureas and thiazolidinediones. Activated by oleoylethanolamide, palmitoyl-carnitine and oleoyl-carnitine. In terms of biological role, catalyzes the phosphorylation of pantothenate to generate 4'-phosphopantothenate in the first and rate-determining step of coenzyme A (CoA) synthesis. In Homo sapiens (Human), this protein is Pantothenate kinase 3 (PANK3).